The following is a 529-amino-acid chain: Probable DNA helicase MPN_340 (529 aa).

Residues 2–285 (EHLNQEQKAA…FYTTQNYRSI (284 aa)) enclose the UvrD-like helicase ATP-binding domain. ATP is bound at residue 23–30 (SGAGTGKT).

This sequence belongs to the helicase family. UvrD subfamily.

It carries out the reaction Couples ATP hydrolysis with the unwinding of duplex DNA by translocating in the 3'-5' direction.. The catalysed reaction is ATP + H2O = ADP + phosphate + H(+). In Mycoplasma pneumoniae (strain ATCC 29342 / M129 / Subtype 1) (Mycoplasmoides pneumoniae), this protein is Probable DNA helicase MPN_340.